The primary structure comprises 416 residues: MSTPLQGIKVLDFTGVQSGPSCTQMLAWFGADVIKIERPGVGDVTRHQLRDIPDIDALYFTMLNSNKRSIELNTKTAEGKEVMEKLIREADILVENFHPGAIDHMGFTWEHIQEINPRLIFGSIKGFDECSPYVNVKAYENVAQAAGGAASTTGFWDGPPLVSAAALGDSNTGMHLLIGLLAALLHREKTGRGQRVTMSMQDAVLNLCRVKLRDQQRLDKLGYLEEYPQYPNGTFGDAVPRGGNAGGGGQPGWILKCKGWETDPNAYIYFTIQEQNWENTCKAIGKPDWITDPAYSTAHARQPHIFDIFAEIEKYTVTIDKHEAVAYLTQFDIPCAPVLSMKEISLDPSLRQSGSVVEVEQPLRGKYLTVGCPMKFSAFTPDIKAAPLLGEHTAAVLQELGYSDDEIAAMKQNHAI.

Residues 17-18 (QS), Arg38, 72-75 (LNTK), 96-98 (NFH), His104, and 137-140 (KAYE) contribute to the CoA site. The Nucleophile role is filled by Asp169. 248–250 (GGQ) provides a ligand contact to substrate. CoA is bound at residue 273–275 (QEQ).

Belongs to the CoA-transferase III family. Frc subfamily. As to quaternary structure, homodimer.

The catalysed reaction is formyl-CoA + oxalate = oxalyl-CoA + formate. The protein operates within metabolic intermediate degradation; oxalate degradation; CO(2) and formate from oxalate: step 1/2. In terms of biological role, involved in the catabolism of oxalate and in the adapatation to low pH via the induction of the oxalate-dependent acid tolerance response (ATR). Catalyzes the transfer of the CoA moiety from formyl-CoA to oxalate. This is Formyl-CoA:oxalate CoA-transferase from Escherichia coli O17:K52:H18 (strain UMN026 / ExPEC).